Reading from the N-terminus, the 215-residue chain is Glutathione S-transferase D2 (215 aa).

Positions 1–80 (MDFYYMPGGG…YLVEKYGKDD (80 aa)) constitute a GST N-terminal domain. Glutathione contacts are provided by residues 50-52 (HTI) and 64-66 (ESR). Residues 86–212 (DPKKRAVINQ…MKALFDARKL (127 aa)) form the GST C-terminal domain.

This sequence belongs to the GST superfamily. Delta family. Homodimer.

It catalyses the reaction RX + glutathione = an S-substituted glutathione + a halide anion + H(+). In terms of biological role, conjugation of reduced glutathione to a wide number of exogenous and endogenous hydrophobic electrophiles. May be involved in detoxification. This Drosophila melanogaster (Fruit fly) protein is Glutathione S-transferase D2.